We begin with the raw amino-acid sequence, 397 residues long: RNA binding protein fox-1 homolog 1 (397 aa).

The segment at 1–121 (MNCEREQLRG…NKSQPKRLHV (121 aa)) is disordered. Over residues 70-87 (QTHSEQSPADTSAQTVSG) the composition is skewed to polar residues. A compositionally biased stretch (low complexity) spans 88–99 (TATQTDDAAPTD). The span at 100-113 (GQPQTQPSENTENK) shows a compositional bias: polar residues. Residues 117–193 (KRLHVSNIPF…RKIEVNNATA (77 aa)) enclose the RRM domain. Asymmetric dimethylarginine is present on Arg317. At Arg388 the chain carries Omega-N-methylarginine.

In terms of assembly, binds to the C-terminus of ATXN2. As to expression, predominantly expressed in muscle and brain.

It is found in the nucleus. The protein localises to the cytoplasm. Its function is as follows. RNA-binding protein that regulates alternative splicing events by binding to 5'-UGCAUGU-3' elements. Regulates alternative splicing of tissue-specific exons and of differentially spliced exons during erythropoiesis. The protein is RNA binding protein fox-1 homolog 1 (RBFOX1) of Homo sapiens (Human).